The sequence spans 179 residues: Large ribosomal subunit protein uL5 (179 aa).

The protein belongs to the universal ribosomal protein uL5 family. As to quaternary structure, part of the 50S ribosomal subunit; part of the 5S rRNA/L5/L18/L25 subcomplex. Contacts the 5S rRNA and the P site tRNA. Forms a bridge to the 30S subunit in the 70S ribosome.

Functionally, this is one of the proteins that bind and probably mediate the attachment of the 5S RNA into the large ribosomal subunit, where it forms part of the central protuberance. In the 70S ribosome it contacts protein S13 of the 30S subunit (bridge B1b), connecting the 2 subunits; this bridge is implicated in subunit movement. Contacts the P site tRNA; the 5S rRNA and some of its associated proteins might help stabilize positioning of ribosome-bound tRNAs. This Halorhodospira halophila (strain DSM 244 / SL1) (Ectothiorhodospira halophila (strain DSM 244 / SL1)) protein is Large ribosomal subunit protein uL5.